We begin with the raw amino-acid sequence, 368 residues long: 3-dehydroquinate synthase (368 aa).

Residues Asp-76–Lys-81, Gly-110–Asp-114, Thr-134–Thr-135, Lys-147, Lys-156, and Cys-174–Thr-177 each bind NAD(+). Zn(2+) is bound by residues Glu-189, His-252, and His-269.

The protein belongs to the sugar phosphate cyclases superfamily. Dehydroquinate synthase family. NAD(+) is required as a cofactor. Requires Co(2+) as cofactor. Zn(2+) serves as cofactor.

The protein resides in the cytoplasm. It carries out the reaction 7-phospho-2-dehydro-3-deoxy-D-arabino-heptonate = 3-dehydroquinate + phosphate. It participates in metabolic intermediate biosynthesis; chorismate biosynthesis; chorismate from D-erythrose 4-phosphate and phosphoenolpyruvate: step 2/7. Functionally, catalyzes the conversion of 3-deoxy-D-arabino-heptulosonate 7-phosphate (DAHP) to dehydroquinate (DHQ). This is 3-dehydroquinate synthase from Vibrio vulnificus (strain YJ016).